The sequence spans 165 residues: MSVNDGVDQMGAEPDIMEFVEQMGGYFESRSLTRLAGRLLGWLLVCDPERQSSEELATALAASSGGISTNARMLIQFGFIERLAVAGDRRTYFRLRPNAFAAGERERIRAMAELQDLADVGLRALGDAPPQRSRRLREMRDLLAYMENVVSDALGRYSQRTGEDD.

The region spanning 1–151 (MSVNDGVDQM…LLAYMENVVS (151 aa)) is the HTH marR-type domain. Residues 53 to 76 (SEELATALAASSGGISTNARMLIQ) constitute a DNA-binding region (H-T-H motif).

Homodimer.

Functionally, controls the expression level of the Mmps2-MmpL2, MmpS4-MmpL4, and MmpS5-MmpL5 transport systems. Also controls its own expression. Acts by binding directly to the promoter regions. This is HTH-type transcriptional regulator MmpR5 from Mycobacterium tuberculosis (strain ATCC 25618 / H37Rv).